We begin with the raw amino-acid sequence, 676 residues long: Symportin 1 (676 aa).

Positions 1-10 are enriched in basic residues; that stretch reads MGKTRRNRVR. Positions 1-28 are disordered; sequence MGKTRRNRVRNRTDPIAKPVKPPTDPEL. The stretch at 183–216 is one ARM 1 repeat; sequence TILRLLFRLISADIAPQDIYEEAISCLTTLSEDN. Residues 325–385 are disordered; it reads KGNQGSRESP…EDDEDDDDDS (61 aa). Composition is skewed to acidic residues over residues 338–354 and 363–385; these read ADEE…DAMD and EDQE…DDDS. Residues 420 to 453 form an ARM 2 repeat; that stretch reads TAVPQLIRLSNLPIDSDESLTIQSHALSALNNIS.

The protein belongs to the nuclear import and ribosome assembly adapter family. Component of a hexameric 5S RNP precursor complex, composed of 5S RNA, RRS1, RPF2, RPL5, RPL11 and SYO1; this complex acts as a precursor for ribosome assembly.

In terms of biological role, involved in ribosomal large subunit assembly. The polypeptide is Symportin 1 (Chaetomium thermophilum (strain DSM 1495 / CBS 144.50 / IMI 039719) (Thermochaetoides thermophila)).